The following is a 299-amino-acid chain: Rhodanese-like/PpiC domain-containing protein 12, chloroplastic (299 aa).

A chloroplast-targeting transit peptide spans Met-1 to Ala-81. Ser-82 is subject to N-acetylserine. One can recognise a PpiC domain in the interval Ser-93–Ser-183. The Rhodanese domain maps to Phe-205–Pro-297. Cys-257 acts as the Cysteine persulfide intermediate in catalysis.

Its subcellular location is the plastid. The protein localises to the chloroplast. This is Rhodanese-like/PpiC domain-containing protein 12, chloroplastic from Arabidopsis thaliana (Mouse-ear cress).